Here is a 588-residue protein sequence, read N- to C-terminus: Transcriptional regulatory protein ASH1 (588 aa).

At S56 the chain carries Phosphoserine. 3 disordered regions span residues 85–109 (SNTA…GNSP), 377–398 (SNNS…QASN), and 417–495 (SSVS…TRHT). Over residues 99 to 109 (PISSLTPGNSP) the composition is skewed to polar residues. The span at 383 to 392 (NVRKPSKNKI) shows a compositional bias: basic residues. Positions 417–433 (SSVSASSSPSPSTPTKS) are enriched in low complexity. The residue at position 465 (S465) is a Phosphoserine. Positions 470–493 (PRRSSNSSITKKGSRRSSGSSPTR) are enriched in low complexity. The GATA-type; atypical zinc finger occupies 499 to 526 (CVSCHSSDSPCWRPSWSPRKQDQLCNSC).

As to quaternary structure, component of the RPD3C(L) complex composed of at least ASH1, CTI6, DEP1, PHO23, RPD3, RXT2, RXT3, SAP30, SDS3, SIN3, UME1 and UME6.

The protein localises to the nucleus. Its function is as follows. Component of the RPD3C(L) histone deacetylase complex (HDAC). Responsible for the deacetylation of lysine residues on the N-terminal part of the core histones (H2A, H2B, H3 and H4). Histone deacetylation gives a tag for epigenetic repression and plays an important role in transcriptional regulation, cell cycle progression and developmental events. ASH1 is necessary to repress HO in daughter cells to block mating-type switching through its binding to HO promoter 5'-YTGAT-3' sites. Also involved in pseudohyphal growth. The polypeptide is Transcriptional regulatory protein ASH1 (ASH1) (Saccharomyces cerevisiae (strain ATCC 204508 / S288c) (Baker's yeast)).